The primary structure comprises 429 residues: Glutamate-1-semialdehyde 2,1-aminomutase (429 aa).

K272 is modified (N6-(pyridoxal phosphate)lysine).

Belongs to the class-III pyridoxal-phosphate-dependent aminotransferase family. HemL subfamily. The cofactor is pyridoxal 5'-phosphate.

It is found in the cytoplasm. The enzyme catalyses (S)-4-amino-5-oxopentanoate = 5-aminolevulinate. It functions in the pathway porphyrin-containing compound metabolism; protoporphyrin-IX biosynthesis; 5-aminolevulinate from L-glutamyl-tRNA(Glu): step 2/2. The polypeptide is Glutamate-1-semialdehyde 2,1-aminomutase (Methanothrix thermoacetophila (strain DSM 6194 / JCM 14653 / NBRC 101360 / PT) (Methanosaeta thermophila)).